A 110-amino-acid chain; its full sequence is Large ribosomal subunit protein uL22 (110 aa).

It belongs to the universal ribosomal protein uL22 family. Part of the 50S ribosomal subunit.

Functionally, this protein binds specifically to 23S rRNA; its binding is stimulated by other ribosomal proteins, e.g. L4, L17, and L20. It is important during the early stages of 50S assembly. It makes multiple contacts with different domains of the 23S rRNA in the assembled 50S subunit and ribosome. Its function is as follows. The globular domain of the protein is located near the polypeptide exit tunnel on the outside of the subunit, while an extended beta-hairpin is found that lines the wall of the exit tunnel in the center of the 70S ribosome. This is Large ribosomal subunit protein uL22 from Colwellia psychrerythraea (strain 34H / ATCC BAA-681) (Vibrio psychroerythus).